The following is a 539-amino-acid chain: GMP synthase [glutamine-hydrolyzing] (539 aa).

One can recognise a Glutamine amidotransferase type-1 domain in the interval 4 to 202; it reads KILILDFGSQ…VLQIAGAKPD (199 aa). Cysteine 81 functions as the Nucleophile in the catalytic mechanism. Residues histidine 176 and glutamate 178 contribute to the active site. The GMPS ATP-PPase domain occupies 203–395; sequence WIMKNHIEEA…LGLPPEMVYR (193 aa). Position 230–236 (230–236) interacts with ATP; it reads SGGVDSS.

Homodimer.

It carries out the reaction XMP + L-glutamine + ATP + H2O = GMP + L-glutamate + AMP + diphosphate + 2 H(+). The protein operates within purine metabolism; GMP biosynthesis; GMP from XMP (L-Gln route): step 1/1. Its function is as follows. Catalyzes the synthesis of GMP from XMP. This is GMP synthase [glutamine-hydrolyzing] from Burkholderia vietnamiensis (strain G4 / LMG 22486) (Burkholderia cepacia (strain R1808)).